Reading from the N-terminus, the 410-residue chain is Transcription factor SPN1 (410 aa).

The interval 1–132 (MSTADQEQPK…SRQELEEKLD (132 aa)) is disordered. Position 15 is a phosphothreonine (T15). Over residues 20-52 (TASSQKSTINAENENTKQNQSMEPQETSKGTSN) the composition is skewed to polar residues. S23 carries the post-translational modification Phosphoserine; by ATM or ATR. S40 is modified (phosphoserine). The segment covering 53 to 65 (DTKDPDNGEKNEE) has biased composition (basic and acidic residues). A Phosphoserine modification is found at S85. The residue at position 86 (T86) is a Phosphothreonine. S89 is modified (phosphoserine). The TFIIS N-terminal domain occupies 219 to 296 (QSVRIWLEPL…AEWTRPIIGA (78 aa)). The segment at 318–346 (KSVMDSAKNRKKKSKSGEDPTSRGSSVQT) is disordered.

It belongs to the IWS1 family. In terms of assembly, interacts with ABD1, RBP1, SPT5 and SPT6.

The protein resides in the nucleus. Transcription factor involved in RNA polymerase II transcription regulation. May function in both SPT15/TBP post-recruitment and recruitment steps of transcription. The sequence is that of Transcription factor SPN1 (SPN1) from Saccharomyces cerevisiae (strain ATCC 204508 / S288c) (Baker's yeast).